The chain runs to 339 residues: Endospore coat-associated protein YutH (339 aa).

The protein belongs to the CotS family.

The protein localises to the forespore outer membrane. Its subcellular location is the spore coat. Functionally, involved in sporulation. This chain is Endospore coat-associated protein YutH (yutH), found in Bacillus subtilis (strain 168).